Here is a 476-residue protein sequence, read N- to C-terminus: Nodulation protein NoeA (476 aa).

Its function is as follows. Not known; does not seem to participate in nod factor synthesis but required for nodulation on some specific Medicago species such as M.littoralis. In Rhizobium meliloti (strain 1021) (Ensifer meliloti), this protein is Nodulation protein NoeA (noeA).